The chain runs to 160 residues: 3-hydroxyacyl-[acyl-carrier-protein] dehydratase FabZ (160 aa).

His63 is a catalytic residue.

Belongs to the thioester dehydratase family. FabZ subfamily.

It is found in the cytoplasm. It catalyses the reaction a (3R)-hydroxyacyl-[ACP] = a (2E)-enoyl-[ACP] + H2O. Functionally, involved in unsaturated fatty acids biosynthesis. Catalyzes the dehydration of short chain beta-hydroxyacyl-ACPs and long chain saturated and unsaturated beta-hydroxyacyl-ACPs. This Xylella fastidiosa (strain M12) protein is 3-hydroxyacyl-[acyl-carrier-protein] dehydratase FabZ.